The primary structure comprises 404 residues: Ammonium transporter (404 aa).

Helical transmembrane passes span 7–27 (VFMF…ALFY), 44–64 (FSSI…LAFA), 96–116 (LFMM…SGAF), 125–145 (FLLF…HWVW), 158–178 (FAGG…LAIV), 227–247 (INTN…EWII), 254–274 (LGAV…AGFV), 277–297 (FASI…VFSL), and 352–372 (IVAI…IIKI).

Belongs to the ammonia transporter channel (TC 1.A.11.2) family. Interacts with NrgB for a correct localization of the latter. GlnK-AmtB complex interacts with TnrA.

The protein localises to the cell membrane. Functionally, functions as an ammonium and methylammonium transporter in the absence of glutamine. Required for ammonium utilization at low concentrations or at low pH values, when ammonium is the single nitrogen source. Required for binding of NrgB to the membrane. Interaction between GlnK-AmtB complex and TnrA protects TnrA from proteolytic degradation. This is Ammonium transporter from Bacillus subtilis (strain 168).